Here is a 339-residue protein sequence, read N- to C-terminus: Photosystem II assembly lipoprotein Ycf48 (339 aa).

The N-terminal stretch at 1-22 is a signal peptide; the sequence is MVIVKSWQKIFTLLVVLLLCIG. Cysteine 23 carries N-palmitoyl cysteine lipidation. A lipid anchor (S-diacylglycerol cysteine) is attached at cysteine 23.

It belongs to the Ycf48 family. As to quaternary structure, part of early PSII assembly complexes which includes D1 (psbA) and PsbI; not found in mature PSII. Binds to the lumenal side of PSII complexes. Interacts with YidC.

The protein localises to the cellular thylakoid membrane. A factor required for optimal assembly of photosystem II (PSII), acting in the early stages of PSII assembly. Also plays a role in replacement of photodamaged D1 (psbA). Assists YidC in synthesis of chlorophyll-binding proteins. In Nostoc sp. (strain PCC 7120 / SAG 25.82 / UTEX 2576), this protein is Photosystem II assembly lipoprotein Ycf48.